The following is a 720-amino-acid chain: Polyribonucleotide nucleotidyltransferase (720 aa).

Aspartate 484 and aspartate 490 together coordinate Mg(2+). Residues 551–610 enclose the KH domain; that stretch reads PRMYKINIDPSKIGSVIGSGGKTIRSIIEQTNTTVDIENDGTVVIGAIDEASAKKAIKII. The S1 motif domain occupies 620-688; that stretch reads GSIYTGKVTR…NQGRVNLSHR (69 aa). The interval 697-720 is disordered; sequence PISRNRDSQPRRPGPFRPSDRSNS.

This sequence belongs to the polyribonucleotide nucleotidyltransferase family. Requires Mg(2+) as cofactor.

It localises to the cytoplasm. It catalyses the reaction RNA(n+1) + phosphate = RNA(n) + a ribonucleoside 5'-diphosphate. Involved in mRNA degradation. Catalyzes the phosphorolysis of single-stranded polyribonucleotides processively in the 3'- to 5'-direction. The sequence is that of Polyribonucleotide nucleotidyltransferase from Dehalococcoides mccartyi (strain ATCC BAA-2100 / JCM 16839 / KCTC 5957 / BAV1).